A 435-amino-acid polypeptide reads, in one-letter code: C4-dicarboxylate transport protein (435 aa).

Transmembrane regions (helical) follow at residues 4 to 24 (SLFKSLYFQVLTAIAIGILLG), 44 to 64 (LIKMIIAPVIFCTVVTGIAGM), 76 to 96 (VALLYFEIVSTIALIIGLIIV), 142 to 162 (IGAFASGNILQVLLFAVLFGF), 184 to 204 (VIFGIINMIMRLAPIGAFGAM), 222 to 242 (LIICFYITCILFVVVVLGTIA), 289 to 309 (VVGLVIPTGYSFNLDGTSIYL), 326 to 346 (IFHQITLLVVLLLSSKGVAGV), and 352 to 372 (IVLAATISAVGHLPVAGLALI).

The protein belongs to the dicarboxylate/amino acid:cation symporter (DAACS) (TC 2.A.23) family.

It localises to the cell inner membrane. Functionally, responsible for the transport of dicarboxylates such as succinate, fumarate, and malate from the periplasm across the membrane. The protein is C4-dicarboxylate transport protein of Salmonella paratyphi A (strain ATCC 9150 / SARB42).